Here is a 381-residue protein sequence, read N- to C-terminus: MNQFTLPVWVVAAAKSATNILIGNKFRDKERIDLPNKEESISVPISSSALLDNGKRSLAVSHCQSGLPLDITRGVEIWAYIQLSKGSSQSKGKVQNGFPDWLDFHAGCGVGKFQSSGQPCISQFARDLLCINLYPLVPKGNSIKVEIILPEGKDRASKTSNEAFGVVDGLSLIGTQAEVQISASPDQLKNCKEILYHKCSEAKFDGCLTFVIGENGMDLAMKYGLPANQIIKTGNWLGPLLVAAAENGVKKLLLFGYHGKLIKLSGGVFHTHHHLADGRIEILTSLAFREGISFDLIELISKSTSVENALLTLEVSNPDAVSLIWSRMAKEIEIKSRSYVNRYLSSSMEIGSVLFDRKRQMRWAGLEGLKQINSLGLILKR.

Belongs to the CbiD family.

The catalysed reaction is Co-precorrin-5B + S-adenosyl-L-methionine = Co-precorrin-6A + S-adenosyl-L-homocysteine. The protein operates within cofactor biosynthesis; adenosylcobalamin biosynthesis; cob(II)yrinate a,c-diamide from sirohydrochlorin (anaerobic route): step 6/10. In terms of biological role, catalyzes the methylation of C-1 in cobalt-precorrin-5B to form cobalt-precorrin-6A. The sequence is that of Cobalt-precorrin-5B C(1)-methyltransferase from Prochlorococcus marinus (strain NATL1A).